Consider the following 353-residue polypeptide: Methionine import ATP-binding protein MetN (353 aa).

In terms of domain architecture, ABC transporter spans 8-249 (LDQIDVTFHQ…PKQPLTQDFI (242 aa)). Residue 42 to 49 (GYSGAGKS) participates in ATP binding.

This sequence belongs to the ABC transporter superfamily. Methionine importer (TC 3.A.1.24) family. In terms of assembly, the complex is composed of two ATP-binding proteins (MetN), two transmembrane proteins (MetI) and a solute-binding protein (MetQ).

The protein localises to the cell membrane. The catalysed reaction is L-methionine(out) + ATP + H2O = L-methionine(in) + ADP + phosphate + H(+). It carries out the reaction D-methionine(out) + ATP + H2O = D-methionine(in) + ADP + phosphate + H(+). Functionally, part of the ABC transporter complex MetNIQ involved in methionine import. Responsible for energy coupling to the transport system. The protein is Methionine import ATP-binding protein MetN of Streptococcus pneumoniae serotype 4 (strain ATCC BAA-334 / TIGR4).